The primary structure comprises 873 residues: Outer membrane usher protein FimC (873 aa).

The N-terminal stretch at 1–15 (MKQIPLILAMSLAFA) is a signal peptide. A disulfide bridge connects residues C815 and C838.

It belongs to the fimbrial export usher family.

It is found in the cell outer membrane. In terms of biological role, probable porin-like protein necessary for the assembly of a pilin-type protein. The protein is Outer membrane usher protein FimC (fimC) of Bordetella pertussis (strain Tohama I / ATCC BAA-589 / NCTC 13251).